The sequence spans 135 residues: ATP synthase epsilon chain (135 aa).

Residues 91 to 122 form a disordered region; it reads EAQKQLSEAEQAWSKFDGQPNSPDKIKAQQAF.

The protein belongs to the ATPase epsilon chain family. In terms of assembly, F-type ATPases have 2 components, CF(1) - the catalytic core - and CF(0) - the membrane proton channel. CF(1) has five subunits: alpha(3), beta(3), gamma(1), delta(1), epsilon(1). CF(0) has three main subunits: a, b and c.

The protein resides in the cellular thylakoid membrane. Functionally, produces ATP from ADP in the presence of a proton gradient across the membrane. The polypeptide is ATP synthase epsilon chain (Synechococcus sp. (strain RCC307)).